Reading from the N-terminus, the 132-residue chain is Small ribosomal subunit protein uS9 (132 aa).

The disordered stretch occupies residues 101 to 132 (KRAGLLTRDPRMKERKKPGLKAARRSPQFSKR). The segment covering 113–132 (KERKKPGLKAARRSPQFSKR) has biased composition (basic residues).

Belongs to the universal ribosomal protein uS9 family.

The chain is Small ribosomal subunit protein uS9 from Staphylococcus aureus (strain USA300).